The primary structure comprises 272 residues: Phosphate import ATP-binding protein PstB 2 (272 aa).

Positions 26–267 (IEINNLCLNY…PIHKQTEDYI (242 aa)) constitute an ABC transporter domain. 58–65 (GPSGCGKS) contacts ATP.

It belongs to the ABC transporter superfamily. Phosphate importer (TC 3.A.1.7) family. In terms of assembly, the complex is composed of two ATP-binding proteins (PstB), two transmembrane proteins (PstC and PstA) and a solute-binding protein (PstS).

It is found in the cell inner membrane. The enzyme catalyses phosphate(out) + ATP + H2O = ADP + 2 phosphate(in) + H(+). Functionally, part of the ABC transporter complex PstSACB involved in phosphate import. Responsible for energy coupling to the transport system. In Aliivibrio fischeri (strain ATCC 700601 / ES114) (Vibrio fischeri), this protein is Phosphate import ATP-binding protein PstB 2.